A 221-amino-acid polypeptide reads, in one-letter code: Serine/arginine-rich splicing factor 2 (221 aa).

Ser2 carries the post-translational modification N-acetylserine. Ser2 is modified (phosphoserine). Residues Thr14 to Tyr92 enclose the RRM domain. Phosphothreonine is present on residues Thr22 and Thr25. Position 26 is a phosphoserine (Ser26). Lys52 is subject to N6-acetyllysine. Positions Tyr92–Ser221 are disordered. Composition is skewed to basic residues over residues Arg117–Ser171 and Ser179–Ser189. Residues Ser189, Ser191, Ser204, Ser206, Ser208, Ser212, and Ser220 each carry the phosphoserine modification.

The protein belongs to the splicing factor SR family. As to quaternary structure, interacts with CCNL1 and CCNL2. Interacts with SCAF11. Interacts with ZRSR2/U2AF1-RS2. Interacts with CCDC55 (via C-terminus). In vitro, self-associates and binds SRSF1/SFRS1 (ASF/SF2), SNRNP70 and U2AF1 but not U2AF2. Binds SREK1/SFRS12. Interacts with BRDT. In terms of processing, extensively phosphorylated on serine residues in the RS domain. Phosphorylated by SRPK2 and this causes its redistribution from the nuclear speckle to nucleoplasm and controls cell fate decision in response to cisplatin treatment. KAT5/TIP60 inhibits its phosphorylation by preventing SRPK2 nuclear translocation. Acetylation on Lys-52 by KAT5/TIP60 promotes its proteasomal degradation. This effect is counterbalanced by HDAC6, which positively controls SRSF2 protein level by deacetylating it and preventing its proteasomal degradation. As to expression, expressed in all the tissues examined; liver, kidney, spleen, heart, lung and brain.

The protein localises to the nucleus. It localises to the nucleoplasm. Its subcellular location is the nucleus speckle. Necessary for the splicing of pre-mRNA. It is required for formation of the earliest ATP-dependent splicing complex and interacts with spliceosomal components bound to both the 5'- and 3'-splice sites during spliceosome assembly. It also is required for ATP-dependent interactions of both U1 and U2 snRNPs with pre-mRNA. Can bind to the myelin basic protein (MBP) gene MB3 regulatory region and increase transcription of the mbp promoter in cells derived from the CNS. The phosphorylated form (by SRPK2) is required for cellular apoptosis in response to cisplatin treatment. The protein is Serine/arginine-rich splicing factor 2 (Srsf2) of Mus musculus (Mouse).